The following is a 212-amino-acid chain: MPGRERRDGGRSADKNDNNKGRNDRGRNDRNNRRGRGRDDDRNQYIERVVTINRVSKVVKGGRRFSFTALVIVGDGQGMVGVGYGKAKEVPAAIQKGAEEARKNFFRVPMIAGTITHPVQGEAAAGIVMLRPAAPGTGVIAGGATRPVLECAGIQDVLSKSLGSDNAINVVHATVDALKQLVRPEEVAARRGKSVEEVTPTRMLRARAGQGA.

Residues Met1–Arg42 form a disordered region. The 64-residue stretch at Tyr45–Val108 folds into the S5 DRBM domain.

Belongs to the universal ribosomal protein uS5 family. In terms of assembly, part of the 30S ribosomal subunit. Contacts proteins S4 and S8.

Its function is as follows. With S4 and S12 plays an important role in translational accuracy. In terms of biological role, located at the back of the 30S subunit body where it stabilizes the conformation of the head with respect to the body. The chain is Small ribosomal subunit protein uS5 from Corynebacterium kroppenstedtii (strain DSM 44385 / JCM 11950 / CIP 105744 / CCUG 35717).